A 298-amino-acid chain; its full sequence is Acetylglutamate kinase (298 aa).

Substrate contacts are provided by residues 66–67 (GG), Arg88, and Asn193.

It belongs to the acetylglutamate kinase family. ArgB subfamily.

It is found in the cytoplasm. It carries out the reaction N-acetyl-L-glutamate + ATP = N-acetyl-L-glutamyl 5-phosphate + ADP. The protein operates within amino-acid biosynthesis; L-arginine biosynthesis; N(2)-acetyl-L-ornithine from L-glutamate: step 2/4. Catalyzes the ATP-dependent phosphorylation of N-acetyl-L-glutamate. The chain is Acetylglutamate kinase from Methanosphaera stadtmanae (strain ATCC 43021 / DSM 3091 / JCM 11832 / MCB-3).